The primary structure comprises 239 residues: Chlorate reductase subunit gamma (239 aa).

An N-terminal signal peptide occupies residues 1–27; that stretch reads MKTNILVKRMAVIGLAVAAACTGAAAA. Heme b contacts are provided by His-74 and Met-138.

In terms of assembly, heterotrimer of alpha, beta and gamma subunits. Heme b serves as cofactor.

It localises to the periplasm. In terms of biological role, may transfer electrons to the iron-sulfur centers of ClrB. The sequence is that of Chlorate reductase subunit gamma (clrC) from Ideonella dechloratans.